The primary structure comprises 178 residues: Large ribosomal subunit protein uL6 (178 aa).

Belongs to the universal ribosomal protein uL6 family. Part of the 50S ribosomal subunit.

Functionally, this protein binds to the 23S rRNA, and is important in its secondary structure. It is located near the subunit interface in the base of the L7/L12 stalk, and near the tRNA binding site of the peptidyltransferase center. The polypeptide is Large ribosomal subunit protein uL6 (Coxiella burnetii (strain CbuG_Q212) (Coxiella burnetii (strain Q212))).